The following is a 435-amino-acid chain: Trigger factor (435 aa).

Residues 125–147 form a disordered region; the sequence is MEVPEQDTSVSDADVDSELENKR. The region spanning 164 to 249 is the PPIase FKBP-type domain; that stretch reads GDTVVIDYEG…IHEVKEKQLP (86 aa).

The protein belongs to the FKBP-type PPIase family. Tig subfamily.

Its subcellular location is the cytoplasm. The catalysed reaction is [protein]-peptidylproline (omega=180) = [protein]-peptidylproline (omega=0). Its function is as follows. Involved in protein export. Acts as a chaperone by maintaining the newly synthesized protein in an open conformation. Functions as a peptidyl-prolyl cis-trans isomerase. The polypeptide is Trigger factor (Limosilactobacillus fermentum (strain NBRC 3956 / LMG 18251) (Lactobacillus fermentum)).